A 55-amino-acid polypeptide reads, in one-letter code: Large ribosomal subunit protein bL33 (55 aa).

It belongs to the bacterial ribosomal protein bL33 family.

The polypeptide is Large ribosomal subunit protein bL33 (Clavibacter sepedonicus (Clavibacter michiganensis subsp. sepedonicus)).